We begin with the raw amino-acid sequence, 284 residues long: Pseudouridine-5'-phosphate glycosidase (284 aa).

Glu-8 serves as the catalytic Proton donor. The substrate site is built by Lys-69 and Val-89. A Mn(2+)-binding site is contributed by Asp-119. 121–123 is a substrate binding site; that stretch reads SQD. Lys-140 serves as the catalytic Nucleophile.

It belongs to the pseudouridine-5'-phosphate glycosidase family. In terms of assembly, homotrimer. Mn(2+) is required as a cofactor.

It carries out the reaction D-ribose 5-phosphate + uracil = psi-UMP + H2O. Functionally, catalyzes the reversible cleavage of pseudouridine 5'-phosphate (PsiMP) to ribose 5-phosphate and uracil. Functions biologically in the cleavage direction, as part of a pseudouridine degradation pathway. This chain is Pseudouridine-5'-phosphate glycosidase, found in Pseudothermotoga lettingae (strain ATCC BAA-301 / DSM 14385 / NBRC 107922 / TMO) (Thermotoga lettingae).